A 432-amino-acid chain; its full sequence is Serine/threonine-protein kinase stk11 (432 aa).

A Protein kinase domain is found at 52–312 (YLMGDLLGEG…IQQIRQHNWF (261 aa)). Residues 58–66 (LGEGSYGKV) and lysine 81 contribute to the ATP site. Aspartate 179 (proton acceptor) is an active-site residue. Threonine 192 is subject to Phosphothreonine; by autocatalysis. The tract at residues 398–432 (TESQLKTERRVSSSSQRKASTTGSKVRKLSACKQQ) is disordered. The segment covering 409-421 (SSSSQRKASTTGS) has biased composition (polar residues). Positions 422 to 432 (KVRKLSACKQQ) are enriched in basic residues. Serine 427 is subject to Phosphoserine; by PKA.

Belongs to the protein kinase superfamily. CAMK Ser/Thr protein kinase family. LKB1 subfamily. As to quaternary structure, catalytic component of a trimeric complex composed of STK11/LKB1, STRAD (STRADA or STRADB) and CAB39/MO25 (CAB39/MO25alpha or CAB39L/MO25beta). Requires Mg(2+) as cofactor. Mn(2+) serves as cofactor. Phosphorylated by a cAMP-dependent protein kinase. Autophosphorylated in a reaction that prefers Mn(2+) to Mg(2+). As to expression, oocytes, eggs and early embryos.

The protein resides in the nucleus. The protein localises to the cytoplasm. It catalyses the reaction L-seryl-[protein] + ATP = O-phospho-L-seryl-[protein] + ADP + H(+). The catalysed reaction is L-threonyl-[protein] + ATP = O-phospho-L-threonyl-[protein] + ADP + H(+). In terms of biological role, tumor suppressor serine/threonine-protein kinase that controls the activity of AMP-activated protein kinase (AMPK) family members, thereby playing a role in various processes such as cell metabolism, cell polarity, apoptosis and DNA damage response. Acts by phosphorylating the T-loop of AMPK family proteins, leading to promote their activity. This chain is Serine/threonine-protein kinase stk11, found in Xenopus laevis (African clawed frog).